A 356-amino-acid polypeptide reads, in one-letter code: Uroporphyrinogen decarboxylase (356 aa).

Residues 27-31 (RQAGR), Asp77, Tyr154, Ser209, and His327 each bind substrate.

It belongs to the uroporphyrinogen decarboxylase family. In terms of assembly, homodimer.

It is found in the cytoplasm. The catalysed reaction is uroporphyrinogen III + 4 H(+) = coproporphyrinogen III + 4 CO2. It functions in the pathway porphyrin-containing compound metabolism; protoporphyrin-IX biosynthesis; coproporphyrinogen-III from 5-aminolevulinate: step 4/4. Its function is as follows. Catalyzes the decarboxylation of four acetate groups of uroporphyrinogen-III to yield coproporphyrinogen-III. The sequence is that of Uroporphyrinogen decarboxylase from Aromatoleum aromaticum (strain DSM 19018 / LMG 30748 / EbN1) (Azoarcus sp. (strain EbN1)).